The following is a 481-amino-acid chain: ATP synthase subunit beta, chloroplastic (481 aa).

An ATP-binding site is contributed by 161–168; the sequence is GGAGVGKT.

The protein belongs to the ATPase alpha/beta chains family. In terms of assembly, F-type ATPases have 2 components, CF(1) - the catalytic core - and CF(0) - the membrane proton channel. CF(1) has five subunits: alpha(3), beta(3), gamma(1), delta(1), epsilon(1). CF(0) has four main subunits: a(1), b(1), b'(1) and c(9-12).

Its subcellular location is the plastid. It is found in the chloroplast thylakoid membrane. The enzyme catalyses ATP + H2O + 4 H(+)(in) = ADP + phosphate + 5 H(+)(out). Its function is as follows. Produces ATP from ADP in the presence of a proton gradient across the membrane. The catalytic sites are hosted primarily by the beta subunits. This is ATP synthase subunit beta, chloroplastic from Mesostigma viride (Green alga).